Consider the following 96-residue polypeptide: Tenecin-3 (96 aa).

A signal peptide spans 1–18 (MKTFVICLILVVAVSAAP). Residues 19-96 (DHHDGHLGGH…HQGGYKTHGH (78 aa)) form a disordered region. 12 tandem repeats follow at residues 23 to 26 (GHLG), 31 to 34 (GHQG), 35 to 38 (GQQG), 39 to 42 (GHLG), 43 to 46 (GQQG), 47 to 50 (GHLG), 51 to 54 (GHQG), 59 to 62 (GHLG), 63 to 66 (GHQG), 67 to 70 (GIGG), 77 to 80 (GQHG), and 86 to 89 (GHQG). Residues 23 to 89 (GHLGGHQTGH…GPGTGAGHQG (67 aa)) form a 12 X 4 AA repeats of G-X-X-G region. Gly residues predominate over residues 26-89 (GGHQTGHQGG…GPGTGAGHQG (64 aa)).

It to H.diomphalia holotricin 3.

It is found in the secreted. Antifungal heat stable protein produced in response to injury. It is active against C.albicans. No antibacterial activity against Gram-positive and Gram-negative bacteria. The protein is Tenecin-3 of Tenebrio molitor (Yellow mealworm beetle).